The sequence spans 279 residues: Diaminopimelate epimerase (279 aa).

Residues Asn-11 and Asn-64 each coordinate substrate. Residue Cys-73 is the Proton donor of the active site. Substrate is bound by residues 74–75 (GN), Asn-170, and 187–188 (ER). Cys-196 (proton acceptor) is an active-site residue. 197 to 198 (GS) is a substrate binding site. The tract at residues 255–279 (NTDHQRRRHSLSRSPSGRPRLQECR) is disordered.

The protein belongs to the diaminopimelate epimerase family. As to quaternary structure, homodimer.

It localises to the cytoplasm. It carries out the reaction (2S,6S)-2,6-diaminopimelate = meso-2,6-diaminopimelate. It participates in amino-acid biosynthesis; L-lysine biosynthesis via DAP pathway; DL-2,6-diaminopimelate from LL-2,6-diaminopimelate: step 1/1. Its function is as follows. Catalyzes the stereoinversion of LL-2,6-diaminopimelate (L,L-DAP) to meso-diaminopimelate (meso-DAP), a precursor of L-lysine. This is Diaminopimelate epimerase from Methanopyrus kandleri (strain AV19 / DSM 6324 / JCM 9639 / NBRC 100938).